Consider the following 313-residue polypeptide: Protoheme IX farnesyltransferase (313 aa).

A run of 9 helical transmembrane segments spans residues 35–55 (LVVF…HPVL), 56–76 (AATS…LNMW), 98–118 (VSSP…VATL), 120–140 (VLVN…YAVV), 153–173 (IVIG…AATG), 180–200 (IILF…LALF), 226–246 (ILLY…LGYF), 248–268 (AAYG…AFNV), and 292–312 (LFLL…AAMI).

It belongs to the UbiA prenyltransferase family. Protoheme IX farnesyltransferase subfamily.

The protein resides in the cell inner membrane. It catalyses the reaction heme b + (2E,6E)-farnesyl diphosphate + H2O = Fe(II)-heme o + diphosphate. Its pathway is porphyrin-containing compound metabolism; heme O biosynthesis; heme O from protoheme: step 1/1. In terms of biological role, converts heme B (protoheme IX) to heme O by substitution of the vinyl group on carbon 2 of heme B porphyrin ring with a hydroxyethyl farnesyl side group. This Afipia carboxidovorans (strain ATCC 49405 / DSM 1227 / KCTC 32145 / OM5) (Oligotropha carboxidovorans) protein is Protoheme IX farnesyltransferase.